A 198-amino-acid polypeptide reads, in one-letter code: MECSSFEAICNESEMIAHLQSLFWSSSDADPCFGSSSFSLISSEGYDTMTTEFVNSSTNVCFDYQDDSFVSAEETTIGNKRKVQMDTENELMTNRSKEVRTKMSVSKACKHSVSAESSQSYYAKNRRQRINERLRILQELIPNGTKVDISTMLEEAIQYVKFLHLQIKLLSSDEMWMYAPLAFDSGNNRLYQNSLSQE.

The interval S114 to R127 is basic motif; degenerate. The bHLH domain occupies S114–L163. The segment at Q128–L163 is helix-loop-helix motif.

The protein belongs to the bHLH protein family.

Its subcellular location is the nucleus. Functionally, transcription factor that acts as a regulator of iron homeostasis. May act as negative regulator of iron transportation from root to shoot. Does not seem to be involved in the suppression of the induction of iron deficiency responsive genes. The chain is Transcription factor BHLH133 from Oryza sativa subsp. japonica (Rice).